We begin with the raw amino-acid sequence, 119 residues long: Holo-[acyl-carrier-protein] synthase (119 aa).

Mg(2+)-binding residues include D6 and E51.

Belongs to the P-Pant transferase superfamily. AcpS family. Mg(2+) serves as cofactor.

The protein resides in the cytoplasm. The enzyme catalyses apo-[ACP] + CoA = holo-[ACP] + adenosine 3',5'-bisphosphate + H(+). In terms of biological role, transfers the 4'-phosphopantetheine moiety from coenzyme A to a Ser of acyl-carrier-protein. This chain is Holo-[acyl-carrier-protein] synthase, found in Sulfurovum sp. (strain NBC37-1).